The chain runs to 615 residues: MDPGLKPSSSWTHKIVDSIIANRSQTAVQNFRRQPLANKLTALEDAIVQPRKDSTPDSIAAILQELVSMGALKPSEVGPMFSDLLIRVHKYNSTNVQSNLNVLLGDIRAAQSEAIRSTNVGELSNQVILNDFLSRLPPVVPMGQHNYEAFKQSLRLMVNEAPNVTLFKSGPDTMMQVNIRGVNTVNLNSAFSNLQNLWGVVLDSDRVPGSISSKLSSNTRVLLLFLAPFTNENTFTPDTFLWQIMQLYRETVAASIEAPLETEREVAETVRDMGGDIDDVGRTMAYLLKNKEEVMANPRTLSPRQLGVVRYVQESLMDRIDRNGEEPIDALRNIVFSFAPSYFEANGSFIRKLLSYLEVALRNSPNYFREIYSNKYWTPPPSFWTQNYGDFFVEREAEAEREALEEAGPRESYSFLEDPSSSPQSSKIQSLGTCGMTMLRPMSPSVPPTPSVRSAPPSVSYGGPSRSSLSVDSASNRNFGATLARAVLPSAAAAIGNAAGEALYPSLGQFLAPAASLAATRFLSGNRGERIKRQRQRRRAEIERRRIAELTPPSPAPSLSSESSAPSLSSVRTSYTPLAGAKYWNPVDDPEGDRDVSGTGLGNPFDYLRPRNGLK.

The segment at 1–92 (MDPGLKPSSS…DLLIRVHKYN (92 aa)) is peripentonal hexon-tethering domain. Residues 124–238 (SNQVILNDFL…FTNENTFTPD (115 aa)) are binding to hexon-linking protein. Ser-212 carries the phosphoserine; by host modification. Thr-262 carries the post-translational modification Phosphothreonine; by host. Over residues 400–409 (EREALEEAGP) the composition is skewed to basic and acidic residues. Disordered stretches follow at residues 400 to 473 (EREA…SVDS) and 528 to 615 (GERI…NGLK). 2 stretches are compositionally biased toward low complexity: residues 419 to 430 (PSSSPQSSKIQS) and 451 to 460 (SVRSAPPSVS). Ser-451 is modified (phosphoserine; by host). Basic and acidic residues predominate over residues 539–548 (RAEIERRRIA). Residues 557–570 (PSLSSESSAPSLSS) are compositionally biased toward low complexity. The propeptide occupies 602–615 (GNPFDYLRPRNGLK).

This sequence belongs to the adenoviridae hexon-linking protein IIIa family. As to quaternary structure, interacts with hexon proteins; this interaction tethers the peripentonal hexons to hexons situated in the facet. Interacts with the penton protein (via N-terminus). Interacts with packaging protein 3; this interaction is required to promote correct genome packaging. Cleaved near the C-terminus by the viral protease during virion maturation to form the mature protein.

Its subcellular location is the virion. The protein localises to the host nucleus. In terms of biological role, structural component of the virion that acts as a cement protein on the capsid exterior which mediates the interactions between the hexons, including the peripentonal hexons, and reaches all the way to the penton vertices. Two hexon linking proteins IIIa, one from each facet, stabilize the unique edge interface between a pair of facets. As the virus enters the host cell, hexon linking proteins IIIa are shed concomitant with virion acidification in the endosome. During virus assembly, seems to play a role in the serotype specificity of the packaging of viral DNA via its interaction with packaging protein 3. The polypeptide is Pre-hexon-linking protein IIIa (Snake adenovirus serotype 1 (SnAdV-1)).